We begin with the raw amino-acid sequence, 71 residues long: Exodeoxyribonuclease 7 small subunit (71 aa).

It belongs to the XseB family. Heterooligomer composed of large and small subunits.

It localises to the cytoplasm. The enzyme catalyses Exonucleolytic cleavage in either 5'- to 3'- or 3'- to 5'-direction to yield nucleoside 5'-phosphates.. Bidirectionally degrades single-stranded DNA into large acid-insoluble oligonucleotides, which are then degraded further into small acid-soluble oligonucleotides. The protein is Exodeoxyribonuclease 7 small subunit of Clostridium botulinum (strain Kyoto / Type A2).